The chain runs to 376 residues: Dual-specificity RNA methyltransferase RlmN (376 aa).

Glu-96 (proton acceptor) is an active-site residue. The region spanning 102-341 is the Radical SAM core domain; that stretch reads DEDRATLCVS…VVVRKTRGDD (240 aa). An intrachain disulfide couples Cys-109 to Cys-346. Positions 116, 120, and 123 each coordinate [4Fe-4S] cluster. S-adenosyl-L-methionine contacts are provided by residues 170-171, Ser-202, 224-226, and Asn-303; these read GE and SLH. Catalysis depends on Cys-346, which acts as the S-methylcysteine intermediate.

Belongs to the radical SAM superfamily. RlmN family. Requires [4Fe-4S] cluster as cofactor.

It localises to the cytoplasm. It catalyses the reaction adenosine(2503) in 23S rRNA + 2 reduced [2Fe-2S]-[ferredoxin] + 2 S-adenosyl-L-methionine = 2-methyladenosine(2503) in 23S rRNA + 5'-deoxyadenosine + L-methionine + 2 oxidized [2Fe-2S]-[ferredoxin] + S-adenosyl-L-homocysteine. The catalysed reaction is adenosine(37) in tRNA + 2 reduced [2Fe-2S]-[ferredoxin] + 2 S-adenosyl-L-methionine = 2-methyladenosine(37) in tRNA + 5'-deoxyadenosine + L-methionine + 2 oxidized [2Fe-2S]-[ferredoxin] + S-adenosyl-L-homocysteine. Specifically methylates position 2 of adenine 2503 in 23S rRNA and position 2 of adenine 37 in tRNAs. m2A2503 modification seems to play a crucial role in the proofreading step occurring at the peptidyl transferase center and thus would serve to optimize ribosomal fidelity. The protein is Dual-specificity RNA methyltransferase RlmN of Pseudoalteromonas atlantica (strain T6c / ATCC BAA-1087).